Consider the following 127-residue polypeptide: Holo-[acyl-carrier-protein] synthase (127 aa).

Mg(2+) is bound by residues D7 and E56.

The protein belongs to the P-Pant transferase superfamily. AcpS family. Requires Mg(2+) as cofactor.

It is found in the cytoplasm. The enzyme catalyses apo-[ACP] + CoA = holo-[ACP] + adenosine 3',5'-bisphosphate + H(+). Its function is as follows. Transfers the 4'-phosphopantetheine moiety from coenzyme A to a Ser of acyl-carrier-protein. This chain is Holo-[acyl-carrier-protein] synthase, found in Onion yellows phytoplasma (strain OY-M).